The chain runs to 273 residues: Shikimate dehydrogenase (NADP(+)) (273 aa).

Residues 15-17 (SQS) and Thr-62 each bind shikimate. Catalysis depends on Lys-66, which acts as the Proton acceptor. Glu-78 contributes to the NADP(+) binding site. 2 residues coordinate shikimate: Asn-87 and Asp-102. NADP(+) contacts are provided by residues 127–131 (GAGGA), 151–156 (NRTVIK), and Met-215. Tyr-217 provides a ligand contact to shikimate. Gly-239 serves as a coordination point for NADP(+).

Belongs to the shikimate dehydrogenase family. As to quaternary structure, homodimer.

The catalysed reaction is shikimate + NADP(+) = 3-dehydroshikimate + NADPH + H(+). It participates in metabolic intermediate biosynthesis; chorismate biosynthesis; chorismate from D-erythrose 4-phosphate and phosphoenolpyruvate: step 4/7. Its function is as follows. Involved in the biosynthesis of the chorismate, which leads to the biosynthesis of aromatic amino acids. Catalyzes the reversible NADPH linked reduction of 3-dehydroshikimate (DHSA) to yield shikimate (SA). This chain is Shikimate dehydrogenase (NADP(+)), found in Chromobacterium violaceum (strain ATCC 12472 / DSM 30191 / JCM 1249 / CCUG 213 / NBRC 12614 / NCIMB 9131 / NCTC 9757 / MK).